The sequence spans 1246 residues: Superkiller complex protein 2 (1246 aa).

A disordered region spans residues 220-246 (LGGGDEDENEAVGQPGGPRGDTVSASP). Ser-245 and Ser-256 each carry phosphoserine. Residues 319–475 (ILHLERHDSV…WIGRLKRRQI (157 aa)) form the Helicase ATP-binding domain. 332-339 (AHTSAGKT) lines the ATP pocket. Residues 423-426 (DEVH) carry the DEVH box motif. The region spanning 585-755 (GLTSLDLTTS…LTYTMILNLL (171 aa)) is the Helicase C-terminal domain.

It belongs to the helicase family. SKI2 subfamily. Component of the SKI complex which consists of SKIC2, SKIC3 and SKIC8. Interacts with HBS1L isoform 2.

It localises to the nucleus. Its subcellular location is the cytoplasm. It carries out the reaction ATP + H2O = ADP + phosphate + H(+). Functionally, helicase component of the SKI complex, a multiprotein complex that assists the RNA-degrading exosome during the mRNA decay and quality-control pathways. The SKI complex catalyzes mRNA extraction from 80S ribosomal complexes in the 3'-5' direction and channels mRNA to the cytosolic exosome for degradation. SKI-mediated extraction of mRNA from stalled ribosomes allow binding of the Pelota-HBS1L complex and subsequent ribosome disassembly by ABCE1 for ribosome recycling. In the nucleus, the SKI complex associates with transcriptionally active genes in a manner dependent on PAF1 complex (PAF1C). The sequence is that of Superkiller complex protein 2 from Homo sapiens (Human).